The following is a 92-amino-acid chain: Alpha-conotoxin FrXXA 2 (92 aa).

Positions M1 to G24 are cleaved as a signal peptide. Positions Q25–R45 are excised as a propeptide. Disulfide bonds link C63–C72, C68–C80, C73–C90, and C78–C92.

Belongs to the conotoxin D superfamily. Homodimer; disulfide-linked. The homodimer contains 10 disulfide bonds. Expressed by the venom duct.

It localises to the secreted. In terms of biological role, alpha-conotoxins act on postsynaptic membranes, they bind to the nicotinic acetylcholine receptors (nAChR) and thus inhibit them. Through its two C-terminal domains, this homodimeric protein would bind to two nAChR allosteric sites, located outside the nAChR C-loop of the principal binding face and at the adjacent binding interface in a clockwise direction. Component 4b which seems to correspond to this toxin blocks both neuronal and muscular subtypes: human alpha-7/CHRNA7 (IC(50)=125 nM), human alpha-3-beta-2 (CHRNA3-CHRNB2) (IC(50)=282 nM), human alpha-4-beta-2 (CHRNA4-CHRNB2) (IC(50)=697 nM), mouse adult muscular subtype alpha-1-beta-1-delta-epsilon (CHRNA1-CHRNB1-CHRND-CHRNE) (IC(50)=351 nM), and mouse fetal muscular subtype alpha-1-beta-1-gamma-delta (CHRNA1-CHRNB1-CHRNG-CHRND) (IC(50)=447 nM). It shows different dissociation rates towards the different subtypes, with a very slow rate towards alpha-7 subtype (almost irreversible), followed by the adult muscular subtype, the fetal muscular subtype, alpha-3-beta-2 and alpha-4-beta-2 (almost entirely reversible within a few minutes of washing). The sequence is that of Alpha-conotoxin FrXXA 2 from Conus fergusoni (Ferguson's cone).